Consider the following 104-residue polypeptide: MALTQEQKKQFKSIGHHLKPVLIVAENGLTEGVLAELERALNDHELIKVKLALAERDDRRALLDELCAQSRSDLVQSIGKMALVYRKNPKPNKNLSNISRFAGI.

One can recognise a CRM domain in the interval 1-97 (MALTQEQKKQ…NPKPNKNLSN (97 aa)).

The sequence is that of Probable RNA-binding protein PA4753 from Pseudomonas aeruginosa (strain ATCC 15692 / DSM 22644 / CIP 104116 / JCM 14847 / LMG 12228 / 1C / PRS 101 / PAO1).